The chain runs to 227 residues: MARGVFITATGTDIGKTYVTALIIKKLREVNINCGYYKAALSGAERIDSKLIAGDANYVYNIANIKGDPNDAVSYIFQQAVSPHLAAKLNNVEISMDKIKKDFSCIKNKYDYITVEGSGGIICPISMGKEKIMLENIVKSLKLPAIVIADAGLGTINNTILTLQYMKKKNIPIKMILLNNYNHENIIHIENKRYLSDNLSIPVYTCCKDSNNLEIPVERLIEFYEEI.

Position 13 to 18 (13 to 18 (DIGKTY)) interacts with ATP. Residue Thr-17 participates in Mg(2+) binding. The active site involves Lys-38. A substrate-binding site is contributed by Ser-42. Residues Asp-55, 116–119 (EGSG), and 179–180 (NN) contribute to the ATP site. 2 residues coordinate Mg(2+): Asp-55 and Glu-116.

It belongs to the dethiobiotin synthetase family. In terms of assembly, homodimer. Mg(2+) serves as cofactor.

The protein resides in the cytoplasm. The enzyme catalyses (7R,8S)-7,8-diammoniononanoate + CO2 + ATP = (4R,5S)-dethiobiotin + ADP + phosphate + 3 H(+). The protein operates within cofactor biosynthesis; biotin biosynthesis; biotin from 7,8-diaminononanoate: step 1/2. Catalyzes a mechanistically unusual reaction, the ATP-dependent insertion of CO2 between the N7 and N8 nitrogen atoms of 7,8-diaminopelargonic acid (DAPA, also called 7,8-diammoniononanoate) to form a ureido ring. This chain is ATP-dependent dethiobiotin synthetase BioD, found in Clostridium botulinum (strain Loch Maree / Type A3).